A 328-amino-acid chain; its full sequence is UPF0252 protein PF0978 (328 aa).

The helical transmembrane segment at 3–23 threads the bilayer; it reads VPLLILLFLVLTSGCIAPSTP.

The protein belongs to the UPF0252 family.

It localises to the membrane. The protein is UPF0252 protein PF0978 of Pyrococcus furiosus (strain ATCC 43587 / DSM 3638 / JCM 8422 / Vc1).